The following is a 518-amino-acid chain: 3-phosphoshikimate 1-carboxyvinyltransferase 1, chloroplastic (518 aa).

The N-terminal 74 residues, 1–74 (MAQISSMGQG…RISASVVTAQ (74 aa)), are a transit peptide targeting the chloroplast. The 3-phosphoshikimate site is built by lysine 97, serine 98, and arginine 102. Phosphoenolpyruvate is bound at residue lysine 97. Residues glycine 175 and arginine 205 each coordinate phosphoenolpyruvate. Residues serine 252, serine 253, glutamine 254, serine 280, aspartate 405, and lysine 432 each contribute to the 3-phosphoshikimate site. Glutamine 254 provides a ligand contact to phosphoenolpyruvate. Aspartate 405 (proton acceptor) is an active-site residue. Positions 436, 478, and 503 each coordinate phosphoenolpyruvate.

It belongs to the EPSP synthase family.

The protein localises to the plastid. Its subcellular location is the chloroplast. The catalysed reaction is 3-phosphoshikimate + phosphoenolpyruvate = 5-O-(1-carboxyvinyl)-3-phosphoshikimate + phosphate. It participates in metabolic intermediate biosynthesis; chorismate biosynthesis; chorismate from D-erythrose 4-phosphate and phosphoenolpyruvate: step 6/7. In terms of biological role, catalyzes the transfer of the enolpyruvyl moiety of phosphoenolpyruvate (PEP) to the 5-hydroxyl of shikimate-3-phosphate (S3P) to produce enolpyruvyl shikimate-3-phosphate and inorganic phosphate. This Nicotiana tabacum (Common tobacco) protein is 3-phosphoshikimate 1-carboxyvinyltransferase 1, chloroplastic (EPSPS-1).